The sequence spans 478 residues: Methionine aminopeptidase 2-1 (478 aa).

Residues 1 to 124 form a disordered region; it reads MGSKSPEGHN…PRVPLSTLFP (124 aa). Residues 46–56 show a composition bias toward acidic residues; it reads NDDDDADDDEK. The segment covering 92-104 has biased composition (basic residues); that stretch reads KKKKKRKRSKKKA. H230 is a binding site for substrate. The a divalent metal cation site is built by D251, D262, and H331. H339 is a binding site for substrate. E364 and E459 together coordinate a divalent metal cation.

Belongs to the peptidase M24A family. Methionine aminopeptidase eukaryotic type 2 subfamily. Co(2+) serves as cofactor. Requires Zn(2+) as cofactor. It depends on Mn(2+) as a cofactor. Fe(2+) is required as a cofactor.

Its subcellular location is the cytoplasm. The catalysed reaction is Release of N-terminal amino acids, preferentially methionine, from peptides and arylamides.. Functionally, cotranslationally removes the N-terminal methionine from nascent proteins. The N-terminal methionine is often cleaved when the second residue in the primary sequence is small and uncharged (Met-Ala-, Cys, Gly, Pro, Ser, Thr, or Val). The sequence is that of Methionine aminopeptidase 2-1 from Aspergillus clavatus (strain ATCC 1007 / CBS 513.65 / DSM 816 / NCTC 3887 / NRRL 1 / QM 1276 / 107).